Consider the following 190-residue polypeptide: MFHQVWAALLYLYGLLFNSMNQCPEHSQLMTLGMDDKETPEPHLGLWYFIAGAAPTMEELATFDQVDNIVFNMAAGSAPRQLQLRATIRTKNGVCVPRKWTYHLTEGKGNTELRTEGRPDMKTDLFSISCPGGIMLKETGQGYQRFLLYNRSPHPPEECVEEFQSLTSCLDFKAFLVTPRNQEACPLSSK.

Residues 1 to 17 form the signal peptide; it reads MFHQVWAALLYLYGLLF. 3 disulfides stabilise this stretch: C23/C169, C95/C185, and C130/C159. Residues E138 and R145 each coordinate tetradecanoate.

Belongs to the calycin superfamily. Lipocalin family. Highly divergent. In terms of assembly, interacts with LRP2; LRP2 mediates APOM renal uptake and subsequent lysosomal degradation. In terms of tissue distribution, expressed by the liver; secreted in plasma.

The protein resides in the secreted. Functionally, probably involved in lipid transport. Can bind sphingosine-1-phosphate, myristic acid, palmitic acid and stearic acid, retinol, all-trans-retinoic acid and 9-cis-retinoic acid. In Rattus norvegicus (Rat), this protein is Apolipoprotein M (Apom).